A 203-amino-acid chain; its full sequence is RNA annealing protein YRA2 (203 aa).

Met1 is modified (N-acetylmethionine). Disordered stretches follow at residues 1-60 (MDKA…REEP) and 137-203 (QPQR…YMKG). Positions 11–20 (NSHTDSSSNH) are enriched in polar residues. Over residues 47–60 (SRSKDRLYREREEP) the composition is skewed to basic and acidic residues. The RRM domain maps to 64–138 (KRIRISKIPL…AKIEVEIYQP (75 aa)). Basic residues-rich tracts occupy residues 139-153 (QRKH…RRKQ) and 163-180 (PGSH…KNKG).

The protein belongs to the YRA1 family. In terms of assembly, associates with mRNPs. Interacts with YRA1.

It localises to the nucleus. Involved in export of poly(A) mRNAs from the nucleus. Recruited to the coding sequences as well as poly-A sites of active genes. The protein is RNA annealing protein YRA2 (YRA2) of Saccharomyces cerevisiae (strain Lalvin EC1118 / Prise de mousse) (Baker's yeast).